The following is a 243-amino-acid chain: ATP-dependent dethiobiotin synthetase BioD (243 aa).

12–17 (DVGKTF) contributes to the ATP binding site. Threonine 16 lines the Mg(2+) pocket. Lysine 37 is a catalytic residue. Serine 41 is a binding site for substrate. ATP-binding positions include aspartate 54, 115 to 118 (EGCG), and 179 to 180 (NM). Residues aspartate 54 and glutamate 115 each coordinate Mg(2+).

The protein belongs to the dethiobiotin synthetase family. Homodimer. Requires Mg(2+) as cofactor.

It is found in the cytoplasm. The enzyme catalyses (7R,8S)-7,8-diammoniononanoate + CO2 + ATP = (4R,5S)-dethiobiotin + ADP + phosphate + 3 H(+). It participates in cofactor biosynthesis; biotin biosynthesis; biotin from 7,8-diaminononanoate: step 1/2. Its function is as follows. Catalyzes a mechanistically unusual reaction, the ATP-dependent insertion of CO2 between the N7 and N8 nitrogen atoms of 7,8-diaminopelargonic acid (DAPA, also called 7,8-diammoniononanoate) to form a ureido ring. This Caldicellulosiruptor bescii (strain ATCC BAA-1888 / DSM 6725 / KCTC 15123 / Z-1320) (Anaerocellum thermophilum) protein is ATP-dependent dethiobiotin synthetase BioD.